The chain runs to 289 residues: 5'-3' exonuclease (289 aa).

The 91-residue stretch at 166-256 (VEPQKIPDYL…EEDLKIKRPD (91 aa)) folds into the 5'-3' exonuclease domain.

Functionally, 5'-3' exonuclease acting preferentially on double-stranded DNA. The protein is 5'-3' exonuclease of Aquifex aeolicus (strain VF5).